Here is a 256-residue protein sequence, read N- to C-terminus: Type III pantothenate kinase (256 aa).

6-13 (DAGNSRIK) lines the ATP pocket. Substrate contacts are provided by residues Y90 and 97-100 (GSDR). D99 acts as the Proton acceptor in catalysis. Residue T123 coordinates ATP. T187 is a substrate binding site.

The protein belongs to the type III pantothenate kinase family. As to quaternary structure, homodimer. Requires NH4(+) as cofactor. The cofactor is K(+).

Its subcellular location is the cytoplasm. The catalysed reaction is (R)-pantothenate + ATP = (R)-4'-phosphopantothenate + ADP + H(+). The protein operates within cofactor biosynthesis; coenzyme A biosynthesis; CoA from (R)-pantothenate: step 1/5. Catalyzes the phosphorylation of pantothenate (Pan), the first step in CoA biosynthesis. The sequence is that of Type III pantothenate kinase from Burkholderia mallei (strain ATCC 23344).